The chain runs to 71 residues: Large ribosomal subunit protein bL31 (71 aa).

Zn(2+) contacts are provided by cysteine 16, cysteine 18, cysteine 37, and cysteine 40.

This sequence belongs to the bacterial ribosomal protein bL31 family. Type A subfamily. Part of the 50S ribosomal subunit. Requires Zn(2+) as cofactor.

In terms of biological role, binds the 23S rRNA. This chain is Large ribosomal subunit protein bL31, found in Wigglesworthia glossinidia brevipalpis.